The chain runs to 185 residues: Large ribosomal subunit protein uL18 (185 aa).

This sequence belongs to the universal ribosomal protein uL18 family. Part of the 50S ribosomal subunit. Contacts the 5S and 23S rRNAs.

In terms of biological role, this is one of the proteins that bind and probably mediate the attachment of the 5S RNA into the large ribosomal subunit, where it forms part of the central protuberance. This chain is Large ribosomal subunit protein uL18, found in Halorubrum lacusprofundi (strain ATCC 49239 / DSM 5036 / JCM 8891 / ACAM 34).